Consider the following 92-residue polypeptide: Small ribosomal subunit protein uS19 (92 aa).

Belongs to the universal ribosomal protein uS19 family.

Its function is as follows. Protein S19 forms a complex with S13 that binds strongly to the 16S ribosomal RNA. The protein is Small ribosomal subunit protein uS19 of Picosynechococcus sp. (strain ATCC 27264 / PCC 7002 / PR-6) (Agmenellum quadruplicatum).